The primary structure comprises 842 residues: Elongation factor 2 (842 aa).

The tr-type G domain maps to 17-253 (TNVRNMSVIA…LWGDSYFNPK (237 aa)). GTP contacts are provided by residues 26-33 (AHVDHGKS), 158-161 (NKVD), and 213-215 (SGL). Residue histidine 699 is modified to Diphthamide.

This sequence belongs to the TRAFAC class translation factor GTPase superfamily. Classic translation factor GTPase family. EF-G/EF-2 subfamily.

It localises to the cytoplasm. It catalyses the reaction GTP + H2O = GDP + phosphate + H(+). Catalyzes the GTP-dependent ribosomal translocation step during translation elongation. During this step, the ribosome changes from the pre-translocational (PRE) to the post-translocational (POST) state as the newly formed A-site-bound peptidyl-tRNA and P-site-bound deacylated tRNA move to the P and E sites, respectively. Catalyzes the coordinated movement of the two tRNA molecules, the mRNA and conformational changes in the ribosome. The sequence is that of Elongation factor 2 (EFT1) from Eremothecium gossypii (strain ATCC 10895 / CBS 109.51 / FGSC 9923 / NRRL Y-1056) (Yeast).